Consider the following 421-residue polypeptide: Meiotic fizzy-related protein 1 (421 aa).

The interval 79–107 is disordered; the sequence is DTPDRKSYSLSPISPQSQDMLRQPQKPKR. The segment covering 86 to 98 has biased composition (polar residues); it reads YSLSPISPQSQDM. 7 WD repeats span residues 123–160, 164–203, 206–246, 247–286, 289–331, 333–374, and 377–416; these read KNDF…VVQL, GATN…SVRS, GHSE…EMMK, VHEQ…PLHK, EHTA…LQNK, DTGS…NIAN, and AHTN…PKEE.

This sequence belongs to the WD repeat CDC20/Fizzy family. As to quaternary structure, interacts with mes1.

It is found in the nucleus. Its function is as follows. Meiosis-specific activator of the anaphase promoting complex/cyclosome (APC/C). Involved in cdc13 degradation. This chain is Meiotic fizzy-related protein 1 (mfr1), found in Schizosaccharomyces pombe (strain 972 / ATCC 24843) (Fission yeast).